The sequence spans 873 residues: DNA mismatch repair protein MutS (873 aa).

628–635 (GPNMAGKS) is a binding site for ATP.

It belongs to the DNA mismatch repair MutS family.

This protein is involved in the repair of mismatches in DNA. It is possible that it carries out the mismatch recognition step. This protein has a weak ATPase activity. This chain is DNA mismatch repair protein MutS, found in Chlorobium chlorochromatii (strain CaD3).